The primary structure comprises 365 residues: Alpha-keto acid-binding periplasmic protein TakP (365 aa).

The tat-type signal signal peptide spans 1-26; the sequence is MDRRSFITKAAVGGAAASALAAPALA. Residues 99 to 100, glutamine 156, and arginine 177 each bind substrate; that span reads YY. Residue glutamine 156 coordinates Na(+). Glutamate 214, tryptophan 215, and glutamate 240 together coordinate Na(+).

The protein belongs to the bacterial solute-binding protein 7 family. Homodimer. The complex comprises the extracytoplasmic solute receptor protein TakP, and the two transmembrane proteins TakQ and TakM. Post-translationally, predicted to be exported by the Tat system. The position of the signal peptide cleavage has not been experimentally proven.

It is found in the periplasm. Functionally, part of the tripartite ATP-independent periplasmic (TRAP) transport system TakPQM involved in the uptake of alpha-keto acids. This protein specifically binds alpha-keto acids including pyruvate, oxobutyrate, oxovalerate and 4-methyl-2-oxovalerate. Ligand-binding affinity increases with the increasing chain length of the aliphatic backbone of the ligand. Is not able to bind alpha-ketoglutarate. This is Alpha-keto acid-binding periplasmic protein TakP from Cereibacter sphaeroides (strain ATCC 17023 / DSM 158 / JCM 6121 / CCUG 31486 / LMG 2827 / NBRC 12203 / NCIMB 8253 / ATH 2.4.1.) (Rhodobacter sphaeroides).